Here is a 565-residue protein sequence, read N- to C-terminus: DNA repair protein RAD7 (565 aa).

2 disordered regions span residues 1–22 (MYRS…PNSA) and 41–68 (WYQR…FTAE). Residues 1–200 (MYRSRNRPKR…SKLVFNKLRD (200 aa)) are hydrophilic. Positions 47 to 62 (KKQEDATDEKKGKAED) are enriched in basic and acidic residues. Phosphoserine occurs at positions 64 and 85. The segment at 105-137 (ADSDEEEYETSHISDTPVSLSSANDRESLTKKR) is disordered. Positions 115 to 127 (SHISDTPVSLSSA) are enriched in polar residues.

To S.pombe SpCC613.14. In terms of assembly, component of the global genome repair (GGR) complex composed of at least ABF1, RAD7 and RAD16. Interacts with ELC1.

Component of the global genome repair (GGR) complex which promotes global genome nucleotide excision repair (GG-NER) which removes DNA damage from nontranscribing DNA. This protein is one of 10 proteins (RAD1, 2,3,4,7,10,14, 16,23 and MMS19) involved in excision repair of DNA damaged with UV light, bulky adducts, or cross-linking agents. The polypeptide is DNA repair protein RAD7 (RAD7) (Saccharomyces cerevisiae (strain ATCC 204508 / S288c) (Baker's yeast)).